Reading from the N-terminus, the 561-residue chain is DNA ligase (561 aa).

Residue Glu249 coordinates ATP. Catalysis depends on Lys251, which acts as the N6-AMP-lysine intermediate. Residues Arg256, Arg271, Glu301, Phe340, Arg417, and Lys423 each contribute to the ATP site.

The protein belongs to the ATP-dependent DNA ligase family. Requires Mg(2+) as cofactor.

It catalyses the reaction ATP + (deoxyribonucleotide)n-3'-hydroxyl + 5'-phospho-(deoxyribonucleotide)m = (deoxyribonucleotide)n+m + AMP + diphosphate.. Functionally, DNA ligase that seals nicks in double-stranded DNA during DNA replication, DNA recombination and DNA repair. The protein is DNA ligase of Methanothermobacter thermautotrophicus (strain ATCC 29096 / DSM 1053 / JCM 10044 / NBRC 100330 / Delta H) (Methanobacterium thermoautotrophicum).